A 396-amino-acid chain; its full sequence is Tryptophan synthase beta chain (396 aa).

N6-(pyridoxal phosphate)lysine is present on Lys86.

Belongs to the TrpB family. As to quaternary structure, tetramer of two alpha and two beta chains. Pyridoxal 5'-phosphate is required as a cofactor.

The catalysed reaction is (1S,2R)-1-C-(indol-3-yl)glycerol 3-phosphate + L-serine = D-glyceraldehyde 3-phosphate + L-tryptophan + H2O. Its pathway is amino-acid biosynthesis; L-tryptophan biosynthesis; L-tryptophan from chorismate: step 5/5. In terms of biological role, the beta subunit is responsible for the synthesis of L-tryptophan from indole and L-serine. The sequence is that of Tryptophan synthase beta chain from Vibrio vulnificus (strain CMCP6).